A 273-amino-acid chain; its full sequence is Dermonecrotic toxin LhSicTox-alphaIA2bvi (273 aa).

Residue H5 is part of the active site. E25 and D27 together coordinate Mg(2+). H41 (nucleophile) is an active-site residue. Intrachain disulfides connect C45–C51 and C47–C190. D85 serves as a coordination point for Mg(2+).

Belongs to the arthropod phospholipase D family. Class II subfamily. It depends on Mg(2+) as a cofactor. As to expression, expressed by the venom gland.

The protein resides in the secreted. It carries out the reaction an N-(acyl)-sphingosylphosphocholine = an N-(acyl)-sphingosyl-1,3-cyclic phosphate + choline. The catalysed reaction is an N-(acyl)-sphingosylphosphoethanolamine = an N-(acyl)-sphingosyl-1,3-cyclic phosphate + ethanolamine. It catalyses the reaction a 1-acyl-sn-glycero-3-phosphocholine = a 1-acyl-sn-glycero-2,3-cyclic phosphate + choline. The enzyme catalyses a 1-acyl-sn-glycero-3-phosphoethanolamine = a 1-acyl-sn-glycero-2,3-cyclic phosphate + ethanolamine. Its function is as follows. Dermonecrotic toxins cleave the phosphodiester linkage between the phosphate and headgroup of certain phospholipids (sphingolipid and lysolipid substrates), forming an alcohol (often choline) and a cyclic phosphate. This toxin acts on sphingomyelin (SM). It may also act on ceramide phosphoethanolamine (CPE), lysophosphatidylcholine (LPC) and lysophosphatidylethanolamine (LPE), but not on lysophosphatidylserine (LPS), and lysophosphatidylglycerol (LPG). It acts by transphosphatidylation, releasing exclusively cyclic phosphate products as second products. Induces dermonecrosis, hemolysis, increased vascular permeability, edema, inflammatory response, and platelet aggregation. This chain is Dermonecrotic toxin LhSicTox-alphaIA2bvi, found in Loxosceles hirsuta (Recluse spider).